Consider the following 538-residue polypeptide: Putative outer membrane porin BglH (538 aa).

The N-terminal stretch at Met-1–Ala-25 is a signal peptide.

This sequence belongs to the porin LamB (TC 1.B.3) family.

It localises to the cell outer membrane. In terms of biological role, may be a sugar porin with a broad carbohydrate specificity. The protein is Putative outer membrane porin BglH (bglH) of Escherichia coli O6:K15:H31 (strain 536 / UPEC).